Consider the following 182-residue polypeptide: MLRVATAECFTHGFVGREIHASASGYTGELGSEILGTELEGKVSVVAACFIPTVSGLRSLLGIDPPEPDEVSKSGAKAYREETDRKVAVMMARAVRERTGADVGIGTTAGIGRGAICLDDGEITLLGRTDVHANLLKPDERIRKRQLQGIKRSLVMFRAYFRCELDELLEEEWVEEVTRDLP.

The protein belongs to the UPF0254 family.

In Methanopyrus kandleri (strain AV19 / DSM 6324 / JCM 9639 / NBRC 100938), this protein is UPF0254 protein MK0012.